The following is a 98-amino-acid chain: uncharacterized protein (98 aa).

Belongs to the CFAP97 family.

This is an uncharacterized protein from Homo sapiens (Human).